We begin with the raw amino-acid sequence, 307 residues long: Ethylmalonyl-CoA decarboxylase (307 aa).

Position 2 is an N-acetylalanine (Ala-2). Lys-217 carries the N6-acetyllysine; alternate modification. At Lys-217 the chain carries N6-succinyllysine; alternate. Lys-301 is subject to N6-succinyllysine.

This sequence belongs to the enoyl-CoA hydratase/isomerase family.

It localises to the cytoplasm. It is found in the cytosol. It carries out the reaction (2S)-ethylmalonyl-CoA + H(+) = butanoyl-CoA + CO2. The catalysed reaction is (S)-methylmalonyl-CoA + H(+) = propanoyl-CoA + CO2. It catalyses the reaction (2R)-ethylmalonyl-CoA + H(+) = butanoyl-CoA + CO2. Decarboxylates ethylmalonyl-CoA, a potentially toxic metabolite, to form butyryl-CoA, suggesting it might be involved in metabolite proofreading. Acts preferentially on (S)-ethylmalonyl-CoA but also has some activity on the (R)-isomer. Also has methylmalonyl-CoA decarboxylase activity at lower level. In Homo sapiens (Human), this protein is Ethylmalonyl-CoA decarboxylase (ECHDC1).